We begin with the raw amino-acid sequence, 116 residues long: POU domain, class 4, transcription factor 1 (116 aa).

The POU-specific domain maps to 1 to 54 (VTQADVGSALANLKIPGVGSLSQSTICRFESLTLSHNNMIALKPILQAWLEEAE). The segment at 56-79 (AQREKMNKPELFNGGEKKRKRTSI) is disordered. Positions 72–116 (KKRKRTSIAAPEKRSLEAYFAVQPRPSSEKIAAIAEKLDLKKNVV) form a DNA-binding region, homeobox.

Belongs to the POU transcription factor family. Class-4 subfamily.

Its subcellular location is the nucleus. It localises to the cytoplasm. In terms of biological role, multifunctional transcription factor with different regions mediating its different effects. Acts by binding (via its C-terminal domain) to sequences related to the consensus octamer motif 5'-ATGCAAAT-3' in the regulatory regions of its target genes. Regulates the expression of specific genes involved in differentiation and survival within a subset of neuronal lineages. It has been shown that activation of some of these genes requires its N-terminal domain, maybe through a neuronal-specific cofactor. This is POU domain, class 4, transcription factor 1 (POU4F1) from Gallus gallus (Chicken).